The sequence spans 364 residues: Zinc finger protein CONSTANS-LIKE 12 (364 aa).

Zn(2+) is bound by residues Cys-5, Cys-8, Cys-28, and His-33. A B box-type 1; atypical zinc finger spans residues Cys-5 to Ile-47. A B box-type 2; degenerate zinc finger spans residues Cys-48–Leu-88. One can recognise a CCT domain in the interval Gln-280–Ser-322.

Belongs to the CONSTANS family.

Its subcellular location is the nucleus. The protein is Zinc finger protein CONSTANS-LIKE 12 (COL12) of Arabidopsis thaliana (Mouse-ear cress).